The following is a 267-amino-acid chain: NH(3)-dependent NAD(+) synthetase (267 aa).

38-45 (GISGGVDS) lines the ATP pocket. Position 44 (aspartate 44) interacts with Mg(2+). Arginine 123 is a deamido-NAD(+) binding site. Residue threonine 143 participates in ATP binding. Glutamate 148 serves as a coordination point for Mg(2+). The deamido-NAD(+) site is built by lysine 156 and aspartate 163. ATP-binding residues include lysine 172 and serine 193. A deamido-NAD(+)-binding site is contributed by 250-251 (HK).

Belongs to the NAD synthetase family. In terms of assembly, homodimer.

It catalyses the reaction deamido-NAD(+) + NH4(+) + ATP = AMP + diphosphate + NAD(+) + H(+). Its pathway is cofactor biosynthesis; NAD(+) biosynthesis; NAD(+) from deamido-NAD(+) (ammonia route): step 1/1. Functionally, catalyzes the ATP-dependent amidation of deamido-NAD to form NAD. Uses ammonia as a nitrogen source. The polypeptide is NH(3)-dependent NAD(+) synthetase (Pyrobaculum aerophilum (strain ATCC 51768 / DSM 7523 / JCM 9630 / CIP 104966 / NBRC 100827 / IM2)).